The following is a 236-amino-acid chain: Class B acid phosphatase (236 aa).

A signal peptide spans 1 to 23 (MRKLTLTLSALALALSLNSVADA). Asp-68 functions as the Nucleophile in the catalytic mechanism. The Mg(2+) site is built by Asp-68 and Asp-70. Asp-70 serves as the catalytic Proton donor. Substrate contacts are provided by residues 136–137 (TG) and Lys-176. Asp-191 contributes to the Mg(2+) binding site.

It belongs to the class B bacterial acid phosphatase family. In terms of assembly, homotetramer. Requires Mg(2+) as cofactor.

The protein localises to the periplasm. The catalysed reaction is a phosphate monoester + H2O = an alcohol + phosphate. Its activity is regulated as follows. Activated by ethanol. Also activated by Co(2+), Zn(2+) and glycerol. Inhibited by EDTA, inorganic phosphate, nucleosides and Ca(2+). Unaffected by fluoride and tartrate. In terms of biological role, dephosphorylates several organic phosphate monoesters including 5'-AMP, 3'-AMP, pNPP, PDP, 5'-UMP, 3'-UMP, G2P, glucose 6-P and ribose 5-P. No activity toward organic phosphate diesters. Also has a phosphotransferase activity catalyzing the transfer of low-energy phosphate groups from organic phosphate monoesters to free hydroxyl groups of various organic compounds. The sequence is that of Class B acid phosphatase (aphA) from Morganella morganii (Proteus morganii).